The following is a 299-amino-acid chain: Pyridoxal kinase PdxY (299 aa).

Ser-18 is a binding site for substrate. 2 residues coordinate ATP: Asp-120 and Glu-157. Residue Asp-235 participates in substrate binding.

Belongs to the pyridoxine kinase family. PdxY subfamily. Homodimer. It depends on Mg(2+) as a cofactor.

It carries out the reaction pyridoxal + ATP = pyridoxal 5'-phosphate + ADP + H(+). It participates in cofactor metabolism; pyridoxal 5'-phosphate salvage; pyridoxal 5'-phosphate from pyridoxal: step 1/1. Pyridoxal kinase involved in the salvage pathway of pyridoxal 5'-phosphate (PLP). Catalyzes the phosphorylation of pyridoxal to PLP. The sequence is that of Pyridoxal kinase PdxY from Deinococcus geothermalis (strain DSM 11300 / CIP 105573 / AG-3a).